The chain runs to 101 residues: Large ribosomal subunit protein uL24 (101 aa).

Belongs to the universal ribosomal protein uL24 family. As to quaternary structure, part of the 50S ribosomal subunit.

In terms of biological role, one of two assembly initiator proteins, it binds directly to the 5'-end of the 23S rRNA, where it nucleates assembly of the 50S subunit. Its function is as follows. One of the proteins that surrounds the polypeptide exit tunnel on the outside of the subunit. This is Large ribosomal subunit protein uL24 from Streptococcus suis (strain 98HAH33).